A 245-amino-acid polypeptide reads, in one-letter code: 4-hydroxy-tetrahydrodipicolinate reductase (245 aa).

NAD(+) contacts are provided by residues 7 to 12 (GAKGKV), 75 to 77 (GTT), and 102 to 105 (APNF). Catalysis depends on His-132, which acts as the Proton donor/acceptor. His-133 contributes to the (S)-2,3,4,5-tetrahydrodipicolinate binding site. Lys-136 acts as the Proton donor in catalysis. 142–143 (GT) is a binding site for (S)-2,3,4,5-tetrahydrodipicolinate.

Belongs to the DapB family.

Its subcellular location is the cytoplasm. The catalysed reaction is (S)-2,3,4,5-tetrahydrodipicolinate + NAD(+) + H2O = (2S,4S)-4-hydroxy-2,3,4,5-tetrahydrodipicolinate + NADH + H(+). It carries out the reaction (S)-2,3,4,5-tetrahydrodipicolinate + NADP(+) + H2O = (2S,4S)-4-hydroxy-2,3,4,5-tetrahydrodipicolinate + NADPH + H(+). It functions in the pathway amino-acid biosynthesis; L-lysine biosynthesis via DAP pathway; (S)-tetrahydrodipicolinate from L-aspartate: step 4/4. Functionally, catalyzes the conversion of 4-hydroxy-tetrahydrodipicolinate (HTPA) to tetrahydrodipicolinate. The protein is 4-hydroxy-tetrahydrodipicolinate reductase of Mycobacterium marinum (strain ATCC BAA-535 / M).